The sequence spans 357 residues: Alanine racemase (357 aa).

The Proton acceptor; specific for D-alanine role is filled by lysine 35. The residue at position 35 (lysine 35) is an N6-(pyridoxal phosphate)lysine. Arginine 131 contributes to the substrate binding site. Tyrosine 256 (proton acceptor; specific for L-alanine) is an active-site residue. Position 304 (methionine 304) interacts with substrate.

Belongs to the alanine racemase family. The cofactor is pyridoxal 5'-phosphate.

The catalysed reaction is L-alanine = D-alanine. The protein operates within amino-acid biosynthesis; D-alanine biosynthesis; D-alanine from L-alanine: step 1/1. In terms of biological role, catalyzes the interconversion of L-alanine and D-alanine. May also act on other amino acids. The sequence is that of Alanine racemase (alr) from Legionella pneumophila (strain Lens).